The chain runs to 3375 residues: Basement membrane proteoglycan (3375 aa).

The N-terminal stretch at 1–22 (MKRSSTVLAALLALLLVATNDA) is a signal peptide. In terms of domain architecture, Ig-like C2-type 1 spans 45 to 130 (VQITVFPSEK…NTVEARATLS (86 aa)). 11 disulfide bridges follow: C66–C114, C149–C161, C156–C174, C168–C183, C190–C202, C197–C215, C209–C224, C233–C246, C240–C259, C253–C268, and C293–C344. LDL-receptor class A domains are found at residues 148 to 184 (QCMADEKACGNNECVKNDYVCDGEPDCRDRSDEANCP), 189 to 225 (TCEPNEFKCNNNKCVQKMWLCDGDDDCGDNSDELNCN), and 232 to 269 (DCKPTEFQCHDRRQCVPSSFHCDGTNDCHDGSDEVGCV). Positions 271–355 (PTVVDPPQTN…AINVKGRVLA (85 aa)) constitute an Ig-like C2-type 2 domain. Residues 364–385 (VDDPRPQPPQPPTAPPQRASCD) form a disordered region. A compositionally biased stretch (pro residues) spans 369 to 378 (PQPPQPPTAP). Cystine bridges form between C384-C400, C402-C411, and C414-C429. A Laminin EGF-like 1; truncated domain is found at 384–431 (CDTRGAVTPYPNNYGTCECKSQVTGPNCDQCKPGAFHLSEKSPEGCLK). Positions 432–441 (CFCFGVSNDC) constitute a Laminin EGF-like 2; first part domain. Residues 450–633 (KDRLMFAGDA…PDGLALEVEQ (184 aa)) form the Laminin IV type A 1 domain. Cystine bridges form between C634–C648, C636–C689, C691–C700, and C703–C718. The Laminin EGF-like 2; second part domain occupies 634 to 666 (CVCPPGYLGTSCEDCAPGYERSGYGPYLGTCVP). A Laminin EGF-like 3; truncated domain is found at 674-720 (CGPGAVAPTAPAQGQCQCKASVIGPNCDRCAPNSFGLAPTNPQGCIP). The Laminin EGF-like 4; first part domain maps to 721-730 (CFCSGVTQQC). The Laminin IV type A 2 domain maps to 740 to 921 (VSIDYARGDR…QGLTAAEVEQ (182 aa)). Residues 922–954 (CICPPGYVGTSCEDCAPGYSRTGGGLYLGLCEK) enclose the Laminin EGF-like 4; second part domain. Disulfide bonds link C955/C964, C957/C971, C974/C983, C986/C1002, C1011/C1021, C1013/C1027, C1030/C1039, C1042/C1058, C1061/C1069, C1063/C1079, C1082/C1091, C1094/C1109, C1152/C1200, C1247/C1294, and C1338/C1384. 3 consecutive Laminin EGF-like domains span residues 955-1004 (CECN…DCQP), 1011-1060 (CHCN…DCTP), and 1061-1111 (CPCP…VCEP). 15 consecutive Ig-like C2-type domains span residues 1126–1222 (PHEV…KRIS), 1226–1311 (PQPV…AVLE), 1319–1401 (PKVD…EPVQ), 1410–1499 (PQRG…ARLN), 1503–1585 (PQAI…RPVE), 1588–1680 (PARV…TPAT), 1690–1785 (PQVE…STLN), 1793–1878 (PRPV…VRLE), 1886–1970 (PTAV…GNVN), 1973–2069 (PSLT…IYIE), 2073–2163 (PSRI…AVHV), 2173–2260 (PKVE…TAVS), 2263–2343 (QQDK…GFVT), 2349–2435 (PDTI…RTVL), and 2446–2530 (TFTV…VDLQ). Over residues 1388–1400 (DPSDNTPLQSEPV) the composition is skewed to polar residues. Disordered stretches follow at residues 1388–1426 (DPSDNTPLQSEPVQLNIRDPAPPQRGAAPQIDPPNQTVN) and 1478–1497 (EYECTSTEPDGSTQLSPPAR). N1422 carries an N-linked (GlcNAc...) asparagine glycan. Cystine bridges form between C1435-C1481, C1527-C1573, C1618-C1663, and C1719-C1767. A compositionally biased stretch (polar residues) spans 1481-1497 (CTSTEPDGSTQLSPPAR). The disordered stretch occupies residues 1773–1792 (NSPPVKTNPSTLNVTPEGTP). The segment covering 1776 to 1788 (PVKTNPSTLNVTP) has biased composition (polar residues). 15 disulfide bridges follow: C1814–C1861, C1907–C1954, C1998–C2053, C2099–C2147, C2195–C2242, C2284–C2329, C2374–C2420, C2467–C2514, C2713–C2725, C2719–C2736, C2738–C2747, C2754–C2764, C2759–C2773, C2775–C2784, and C2935–C2960. A disordered region spans residues 1880 to 1918 (TEDQEPPTAVVEPRTWNGKPGERHQFRCITTGSPTPKIT). Polar residues predominate over residues 1907-1918 (CITTGSPTPKIT). N2476 is a glycosylation site (N-linked (GlcNAc...) asparagine). The region spanning 2532–2713 (DDFIPVIDGE…PSSVVKYDAC (182 aa)) is the Laminin G-like 1 domain. Residues 2793-2960 (PLGFTSDTSF…LSSSGDISSC (168 aa)) enclose the Laminin G-like 2 domain. The N-linked (GlcNAc...) asparagine glycan is linked to N2950. Over residues 2952-2963 (SSSGDISSCEES) the composition is skewed to low complexity. The interval 2952 to 3124 (SSSGDISSCE…GTLPPDSSSE (173 aa)) is disordered. Composition is skewed to acidic residues over residues 2979 to 2990 (EEPEAVIEEPTT) and 2999 to 3010 (PITEEPTEEPTT). A compositionally biased stretch (low complexity) spans 3011-3033 (TEEPTTTEEPTTTTEEPTTTTTE). The segment covering 3034–3044 (EPYHIYETSRD) has biased composition (basic and acidic residues). Low complexity predominate over residues 3049-3079 (IIIPVETTTTSTTTTSTTEEPEAEPALVLPT). Residues 3081–3094 (PVEENDVSDEEEEI) are compositionally biased toward acidic residues. 4 disulfide bridges follow: C3141–C3152, C3146–C3162, C3164–C3173, and C3333–C3359. N3143 and N3156 each carry an N-linked (GlcNAc...) asparagine glycan. The Laminin G-like 3 domain maps to 3180 to 3359 (EHAARFDGDA…AIDGKNVKPC (180 aa)).

Component of an integrin containing attachment complex, composed of at least pat-2, pat-3, pat-4, pat-6, unc-52, unc-97 and unc-112. In terms of tissue distribution, detected on embryonic and adult body wall muscle cells (at protein level). Found in the basement membrane of all contractile tissues (at protein level). Expressed in gonadal sheath cells and spermatheca.

Its subcellular location is the secreted. It localises to the extracellular space. The protein localises to the extracellular matrix. The protein resides in the basement membrane. It is found in the cytoplasm. Its subcellular location is the myofibril. It localises to the sarcomere. The protein localises to the m line. In terms of biological role, component of an integrin containing attachment complex, which is required for muscle development and maintenance. Probable structural role in myofilament assembly and/or attachment of the myofilament lattice to the cell membrane. May be an extracellular anchor for integrin receptors in body wall muscles and myoepithelial sheath cells. During the formation of neuromuscular junctions at the larval stage, negatively regulates membrane protrusion from body wall muscles, probably downstream of the integrin complex formed by pat-2 and pat-3. Involved in ovulation. Required for normal lifespan. This Caenorhabditis elegans protein is Basement membrane proteoglycan.